Reading from the N-terminus, the 278-residue chain is HTH-type transcriptional regulator HdfR (278 aa).

An HTH lysR-type domain is found at 1-58 (MDTELLKTFLEVSRTRHFGRAAEALYLTQSAVSFRIRQLENQLGVNLFTRHRNNIRLT). The H-T-H motif DNA-binding region spans 18 to 37 (FGRAAEALYLTQSAVSFRIR).

It belongs to the LysR transcriptional regulatory family.

Functionally, negatively regulates the transcription of the flagellar master operon flhDC by binding to the upstream region of the operon. This Salmonella agona (strain SL483) protein is HTH-type transcriptional regulator HdfR.